Reading from the N-terminus, the 215-residue chain is HTH-type transcriptional repressor FabR (215 aa).

An HTH tetR-type domain is found at K10–L70. The H-T-H motif DNA-binding region spans S33–F52.

As to quaternary structure, homodimer.

It localises to the cytoplasm. Functionally, represses the transcription of fabB, involved in unsaturated fatty acid (UFA) biosynthesis. By controlling UFA production, FabR directly influences the physical properties of the membrane bilayer. In Escherichia coli O139:H28 (strain E24377A / ETEC), this protein is HTH-type transcriptional repressor FabR.